We begin with the raw amino-acid sequence, 1885 residues long: MKPEIEQELSHTLLTELLAYQFASPVRWIETQDVFLKQHNTERIIEIGPSPTLAGMANRTIKAKYESYDAALSLQRQVLCYSKDAKEIYYKPDPADLAPKETPKQEESTPSAPAAATPTPAAAAAPTPAPAPASAGPVESIPDEPVKANLLIHVLVAQKLKKPLDAVPMTKAIKDLVNGKSTVQNEILGDLGKEFGSTPEKPEDTPLEELAEQFQDSFSGQLGKTSTSLIGRLMSSKMPGGFSITTARKYLESRFGLGAGRQDSVLLMALTNEPANRLGSEADAKTFFDGIAQKYASSAGISLSSGAGSGAGAANSGGAVVDSAALDALTAENKKLAKQQLEVLARYLQSRLKQGSLKSFIKEKEASAVLQKELDLWEAEHGEFYAKGIQPTFSALKSRTYDSYWNWARQDVLSMYFDIIFGKLTSVDRETINQCIQIMNRANPTLIKFMQYHIDHCPEYKGETYKLAKRLGQQLIDNCKQVLTEDPVYKDVSRITGPKTKVSAKGNIEYEETQKDSVRKFEQYVYEMAQGGAMTKVSQPTIQEDLARVYKAISKQASKDSKLELQRVYEDLLKVVESSKEIETEQLTKDILQAATVPTTPTEEVDDPCTPSSDDEIASLPDKTSIIQPVSSTIPSQTIPFLHIQKKTKDGWEYNKKLSSLYLDGLESAAINGLTFKDKYVLVTGAGAGSIGAEILQGLISGGAKVIVTTSRFSKKVTEYYQNMYARYGAAGSTLIVVPFNQGSKQDVDALVQYIYDEPKKGGLGWDLDAIIPFAAIPENGNGLDNIDSKSEFAHRIMLTNLLRLLGAVKSKKPTDTRPAQCILPLSPNHGTFGFDGLYSESKISLETLFNRWYSEDWGSKLTVCGAVIGWTRGTGLMSANNIIAEGIEKLGVRTFSQKEMAFNILGLLTPEIVQLCQEEPVMADLNGGLQFIDNLKDFTSKLRTDLLETADIRRAVSIESAIEQKVVNGDNVDANYSKVMVEPRANMKFDFPTLKSYDEIKQIAPELEGMLDLENVVVVTGFAEVGPWGNSRTRWEMEAYGEFSLEGAIEMAWIMGFIKYHNGNLQGKPYSGWVDAKTQTPIDEKDIKSKYEEEILEHSGIRLIEPELFNGYDPKKKQMIQEIVVQHDLEPFECSKETAEQYKHEHGEKCEIFEIEESGEYTVRILKGATLYVPKALRFDRLVAGQIPTGWDARTYGIPEDTISQVDPITLYVLVATVEALLSAGITDPYEFYKYVHVSEVGNCSGSGMGGVSALRGMFKDRYADKPVQNDILQESFINTMSAWVNMLLLSSSGPIKTPVGACATAVESVDIGIETILSGKAKVVLVGGYDDFQEEGSYEFANMNATSNSIEEFKHGRTPKEMSRPTTTTRNGFMEAQGSGIQVIMTADLALKMGVPIHAVLAMTATATDKIGRSVPAPGKGILTTAREHHGNLKYPSPLLNIKYRKRQLNKRLEQIKSWEETELSYLQEEAELAKEEFGDEFSMHEFLKERTEEVYRESKRQVSDAKKQWGNSFYKSDPRIAPLRGALAAFNLTIDDIGVASFHGTSTVANDKNESATINNMMKHLGRSEGNPVFGVFQKYLTGHPKGAAGAWMLNGAIQILESGLVPGNRNADNVDKLLEQYEYVLYPSRSIQTDGIKAVSVTSFGFGQKGAQAVVVHPDYLFAVLDRSTYEEYATKVSARNKKTYRYMHNAITRNTMFVAKDKAPYSDELEQPVYLDPLARVEENKKKLVFSDKTIQSNQSYVGEVAQKTAKALSTLNKSSKGVGVDVELLSAINIDNETFIERNFTGNEVEYCLNTAHPQASFTGTWSAKEAVFKALGVESKGAGASLIDIEITRDVNGAPKVILHGEAKKAAAKAGVKNVNISISHDDFQATAVALSEF.

A compositionally biased stretch (basic and acidic residues) spans 92–107 (PDPADLAPKETPKQEE). The interval 92-140 (PDPADLAPKETPKQEESTPSAPAAATPTPAAAAAPTPAPAPASAGPVES) is disordered. The span at 108 to 126 (STPSAPAAATPTPAAAAAP) shows a compositional bias: low complexity. The Carrier domain maps to 146–221 (VKANLLIHVL…EQFQDSFSGQ (76 aa)). Ser-181 carries the post-translational modification O-(pantetheine 4'-phosphoryl)serine. Positions 1121–1661 (IQEIVVQHDL…QKGAQAVVVH (541 aa)) constitute a Ketosynthase family 3 (KS3) domain. Active-site for beta-ketoacyl synthase activity residues include Cys-1304, His-1546, and His-1587. Positions 1771, 1772, and 1773 each coordinate Mg(2+). Residues 1771-1773 (DVE), Tyr-1797, Ser-1807, 1816-1826 (EAVFKALGVES), 1840-1843 (RDVN), and 1870-1872 (ISH) each bind acetyl-CoA. Residues Ser-1871 and His-1872 each contribute to the Mg(2+) site.

This sequence belongs to the thiolase-like superfamily. Fungal fatty acid synthetase subunit alpha family. In terms of assembly, [Alpha(6)beta(6)] hexamers of two multifunctional subunits (alpha and beta).

It catalyses the reaction acetyl-CoA + n malonyl-CoA + 2n NADPH + 4n H(+) = a long-chain-acyl-CoA + n CoA + n CO2 + 2n NADP(+).. The catalysed reaction is a fatty acyl-[ACP] + malonyl-[ACP] + H(+) = a 3-oxoacyl-[ACP] + holo-[ACP] + CO2. It carries out the reaction a (3R)-hydroxyacyl-[ACP] + NADP(+) = a 3-oxoacyl-[ACP] + NADPH + H(+). Its function is as follows. Fatty acid synthetase catalyzes the formation of long-chain fatty acids from acetyl-CoA, malonyl-CoA and NADPH. The alpha subunit contains domains for: acyl carrier protein, 3-oxoacyl-[acyl-carrier-protein] reductase, and 3-oxoacyl-[acyl-carrier-protein] synthase. The chain is Fatty acid synthase subunit alpha (FAS2) from Candida albicans (Yeast).